Consider the following 182-residue polypeptide: Small ribosomal subunit protein uS9 (182 aa).

This sequence belongs to the universal ribosomal protein uS9 family.

The polypeptide is Small ribosomal subunit protein uS9 (Corynebacterium efficiens (strain DSM 44549 / YS-314 / AJ 12310 / JCM 11189 / NBRC 100395)).